The primary structure comprises 281 residues: ATP phosphoribosyltransferase (281 aa).

It belongs to the ATP phosphoribosyltransferase family. Long subfamily. Mg(2+) is required as a cofactor.

It localises to the cytoplasm. The enzyme catalyses 1-(5-phospho-beta-D-ribosyl)-ATP + diphosphate = 5-phospho-alpha-D-ribose 1-diphosphate + ATP. It participates in amino-acid biosynthesis; L-histidine biosynthesis; L-histidine from 5-phospho-alpha-D-ribose 1-diphosphate: step 1/9. Feedback inhibited by histidine. Its function is as follows. Catalyzes the condensation of ATP and 5-phosphoribose 1-diphosphate to form N'-(5'-phosphoribosyl)-ATP (PR-ATP). Has a crucial role in the pathway because the rate of histidine biosynthesis seems to be controlled primarily by regulation of HisG enzymatic activity. This is ATP phosphoribosyltransferase from Salinispora tropica (strain ATCC BAA-916 / DSM 44818 / JCM 13857 / NBRC 105044 / CNB-440).